The chain runs to 221 residues: F-box protein At1g55000 (221 aa).

Positions Asp-7–Thr-46 constitute an F-box domain. The region spanning Ile-74–Ile-118 is the LysM domain.

Part of a SCF (ASK-cullin-F-box) protein ligase complex. Interacts with SKP1A/ASK1, SKP1B/ASK2, ASK4, ASK11 and ASK13.

It participates in protein modification; protein ubiquitination. Functionally, component of SCF(ASK-cullin-F-box) E3 ubiquitin ligase complexes, which may mediate the ubiquitination and subsequent proteasomal degradation of target proteins. The protein is F-box protein At1g55000 of Arabidopsis thaliana (Mouse-ear cress).